A 250-amino-acid polypeptide reads, in one-letter code: Small ribosomal subunit protein uS2 (250 aa).

Belongs to the universal ribosomal protein uS2 family.

This Polaromonas naphthalenivorans (strain CJ2) protein is Small ribosomal subunit protein uS2.